A 97-amino-acid polypeptide reads, in one-letter code: HssA/B-like protein 32 (97 aa).

Disordered regions lie at residues methionine 1–serine 23 and alanine 62–serine 97. The segment covering alanine 62–glycine 74 has biased composition (gly residues). Positions serine 75–glycine 88 are enriched in basic residues.

It belongs to the hssA/B family.

In Dictyostelium discoideum (Social amoeba), this protein is HssA/B-like protein 32 (hssl32).